Consider the following 159-residue polypeptide: NAD(P)H-quinone oxidoreductase subunit J, chloroplastic (159 aa).

It belongs to the complex I 30 kDa subunit family. In terms of assembly, NDH is composed of at least 16 different subunits, 5 of which are encoded in the nucleus.

The protein resides in the plastid. Its subcellular location is the chloroplast thylakoid membrane. It carries out the reaction a plastoquinone + NADH + (n+1) H(+)(in) = a plastoquinol + NAD(+) + n H(+)(out). The enzyme catalyses a plastoquinone + NADPH + (n+1) H(+)(in) = a plastoquinol + NADP(+) + n H(+)(out). Functionally, NDH shuttles electrons from NAD(P)H:plastoquinone, via FMN and iron-sulfur (Fe-S) centers, to quinones in the photosynthetic chain and possibly in a chloroplast respiratory chain. The immediate electron acceptor for the enzyme in this species is believed to be plastoquinone. Couples the redox reaction to proton translocation, and thus conserves the redox energy in a proton gradient. This is NAD(P)H-quinone oxidoreductase subunit J, chloroplastic from Triticum aestivum (Wheat).